A 42-amino-acid polypeptide reads, in one-letter code: MEEQKMKKIIKAIWNVVIILIVLSIFPIVLMIDVLNVYFGFM.

This is an uncharacterized protein from Escherichia coli (Bacteriophage T4).